A 189-amino-acid chain; its full sequence is HTH-type transcriptional repressor LfrR (189 aa).

The HTH tetR-type domain maps to 12-70 (ERTRRAILDAAMLVLADHPTAALGDIAAAAGVGRSTVHRYYPERTDLLRALARHVHDLS). Residues 33-52 (ALGDIAAAAGVGRSTVHRYY) constitute a DNA-binding region (H-T-H motif). A proflavine binding region spans residues 70–71 (SN).

In terms of assembly, homodimer. Forms a structurally asymmetric homodimer exhibiting local unfolding and a blocked drug-binding site.

Its activity is regulated as follows. Repressor activity is regulated by binding of different substrates of the LfrA multidrug efflux pump, such as acriflavine, proflavine, ethidium bromide and rhodamine 123. Binding of these ligands causes the dissociation of LfrR from the promoter, inducing lfrA expression. In terms of biological role, represses the transcription of the lfrRA operon by binding directly to the promoter region of lfrR-lfrA. Binds specifically to a 143-bp region upstream of the lfrR gene. The polypeptide is HTH-type transcriptional repressor LfrR (Mycolicibacterium smegmatis (strain ATCC 700084 / mc(2)155) (Mycobacterium smegmatis)).